The primary structure comprises 720 residues: Inactive serine protease PAMR1 (720 aa).

Positions 1 to 21 (MELGCWTQLGLTFLQLLLISS) are cleaved as a signal peptide. Cystine bridges form between Cys-128–Cys-150, Cys-177–Cys-199, Cys-239–Cys-250, Cys-244–Cys-260, Cys-262–Cys-271, Cys-280–Cys-329, Cys-315–Cys-342, and Cys-414–Cys-442. Residues 128 to 236 (CGQVLRAPKG…DGFHAIFEEI (109 aa)) enclose the CUB domain. One can recognise an EGF-like domain in the interval 235–272 (EITACSSSPCFHDGTCVLDKAGSYKCACLAGYTGQRCE). Sushi domains lie at 278 to 344 (RNCS…ICIK) and 387 to 444 (APTK…SCIP). The Peptidase S1 domain occupies 445 to 720 (ICGKIENVTA…FKDWIERNMK (276 aa)). Asn-451 carries an N-linked (GlcNAc...) asparagine glycan. A disulfide bond links Cys-489 and Cys-505. The N-linked (GlcNAc...) asparagine glycan is linked to Asn-614. 2 disulfide bridges follow: Cys-630–Cys-649 and Cys-661–Cys-697.

Belongs to the peptidase S1 family.

It localises to the secreted. May play a role in regeneration of skeletal muscle. The polypeptide is Inactive serine protease PAMR1 (PAMR1) (Pongo abelii (Sumatran orangutan)).